Reading from the N-terminus, the 713-residue chain is Polyribonucleotide nucleotidyltransferase (713 aa).

Positions 488 and 494 each coordinate Mg(2+). In terms of domain architecture, KH spans 555 to 614; the sequence is PRIEVMNIPTDKIRDVIGSGGKVIREIVEKTGAKINIEDDGTVKIASSNGKEIEAAKKWI. In terms of domain architecture, S1 motif spans 624–692; the sequence is GEIYEGTVVK…ERGKVRLSMK (69 aa).

Belongs to the polyribonucleotide nucleotidyltransferase family. It depends on Mg(2+) as a cofactor.

Its subcellular location is the cytoplasm. It carries out the reaction RNA(n+1) + phosphate = RNA(n) + a ribonucleoside 5'-diphosphate. In terms of biological role, involved in mRNA degradation. Catalyzes the phosphorolysis of single-stranded polyribonucleotides processively in the 3'- to 5'-direction. The chain is Polyribonucleotide nucleotidyltransferase from Brucella anthropi (strain ATCC 49188 / DSM 6882 / CCUG 24695 / JCM 21032 / LMG 3331 / NBRC 15819 / NCTC 12168 / Alc 37) (Ochrobactrum anthropi).